The chain runs to 79 residues: Conotoxin Vi6.1 (79 aa).

The first 22 residues, 1-22, serve as a signal peptide directing secretion; that stretch reads MKLTCVLIITVLFLTASQLITA. Positions 23-47 are excised as a propeptide; sequence DYSRDQRQYRAVRLGDEMRNFKGAR. Intrachain disulfides connect cysteine 49-cysteine 62, cysteine 56-cysteine 67, and cysteine 61-cysteine 77. Proline 60 and proline 63 each carry 4-hydroxyproline.

Expressed by the venom duct.

The protein resides in the secreted. Functionally, ion channel inhibitor that inhibits the increase in intracellular calcium upon depolarization in DRG neurons. In vivo, both intraperitoneal and intracranial injections into mice induce hyperactivity. The chain is Conotoxin Vi6.1 from Conus virgo (Virgin cone).